The sequence spans 181 residues: Oligoribonuclease (181 aa).

One can recognise an Exonuclease domain in the interval 8-171 (LIWIDLEMTG…DDIRESVAEL (164 aa)). Tyr129 is a catalytic residue.

The protein belongs to the oligoribonuclease family.

It is found in the cytoplasm. 3'-to-5' exoribonuclease specific for small oligoribonucleotides. The protein is Oligoribonuclease of Salmonella choleraesuis (strain SC-B67).